The sequence spans 454 residues: Chromosomal replication initiator protein DnaA (454 aa).

Residues 1 to 77 (MASLNENQKF…GFEVFGRMID (77 aa)) are domain I, interacts with DnaA modulators. The domain II stretch occupies residues 77-115 (DYELYANDELTDIELRRLNNQSPVDEPLSVAKPTSPLVS). The tract at residues 116 to 332 (GLNEKYNFEN…GALNRVEFVA (217 aa)) is domain III, AAA+ region. The ATP site is built by Gly-160, Gly-162, Lys-163, and Thr-164. A domain IV, binds dsDNA region spans residues 333-454 (RANGISIVDI…KDIDSIKRKF (122 aa)).

It belongs to the DnaA family. As to quaternary structure, oligomerizes as a right-handed, spiral filament on DNA at oriC.

The protein localises to the cytoplasm. Plays an essential role in the initiation and regulation of chromosomal replication. ATP-DnaA binds to the origin of replication (oriC) to initiate formation of the DNA replication initiation complex once per cell cycle. Binds the DnaA box (a 9 base pair repeat at the origin) and separates the double-stranded (ds)DNA. Forms a right-handed helical filament on oriC DNA; dsDNA binds to the exterior of the filament while single-stranded (ss)DNA is stabiized in the filament's interior. The ATP-DnaA-oriC complex binds and stabilizes one strand of the AT-rich DNA unwinding element (DUE), permitting loading of DNA polymerase. After initiation quickly degrades to an ADP-DnaA complex that is not apt for DNA replication. Binds acidic phospholipids. This chain is Chromosomal replication initiator protein DnaA, found in Lactococcus lactis subsp. cremoris (strain MG1363).